A 196-amino-acid polypeptide reads, in one-letter code: CASP-like protein 1D1 (196 aa).

A compositionally biased stretch (basic and acidic residues) spans methionine 1–proline 18. Residues methionine 1–proline 22 form a disordered region. Over methionine 1–serine 29 the chain is Cytoplasmic. A helical membrane pass occupies residues valine 30–valine 50. Residues threonine 51–serine 84 lie on the Extracellular side of the membrane. A helical transmembrane segment spans residues alanine 85–leucine 105. At lysine 106–arginine 112 the chain is on the cytoplasmic side. A helical membrane pass occupies residues phenylalanine 113–glycine 133. At alanine 134–serine 167 the chain is on the extracellular side. The helical transmembrane segment at serine 168–phenylalanine 188 threads the bilayer. Over serine 189–lysine 196 the chain is Cytoplasmic.

Belongs to the Casparian strip membrane proteins (CASP) family. In terms of assembly, homodimer and heterodimers.

The protein resides in the cell membrane. In Populus trichocarpa (Western balsam poplar), this protein is CASP-like protein 1D1.